We begin with the raw amino-acid sequence, 420 residues long: Cytochrome P-450 monooxygenase DoxA (420 aa).

Cys-367 contacts heme.

The protein belongs to the cytochrome P450 family. In terms of assembly, monomer. The cofactor is heme.

Its subcellular location is the cytoplasm. The enzyme catalyses 13-deoxydaunorubicin + NADPH + O2 + H(+) = 13-dihydrodaunorubicin + NADP(+) + H2O. It catalyses the reaction 13-dihydrodaunorubicin + NADPH + O2 + H(+) = daunorubicin + NADP(+) + 2 H2O. It carries out the reaction 13-deoxycarminomycin + NADPH + O2 + H(+) = 13-dihydrocarminomycin + NADP(+) + H2O. The catalysed reaction is 13-dihydrocarminomycin + NADPH + O2 + H(+) = carminomycin + NADP(+) + 2 H2O. The enzyme catalyses daunorubicin + NADPH + O2 + H(+) = doxorubicin + NADP(+) + H2O. The protein operates within antibiotic biosynthesis; daunorubicin biosynthesis. It functions in the pathway antibiotic biosynthesis; carminomycin biosynthesis. It participates in antibiotic biosynthesis; doxorubicin biosynthesis. In terms of biological role, involved in the biosynthesis of the anthracyclines carminomycin, daunorubicin (daunomycin) and doxorubicin (adriamycin) which are aromatic polyketide antibiotics that exhibit high cytotoxicity and are widely applied in the chemotherapy of a variety of cancers. In vivo, DoxA catalyzes the C-13 hydroxylation of 13-deoxycarminomycin and 13-deoxydaunorubicin to yield 13-dihydrocarminomycin and 13-dihydrodaunorubicin, respectively, as well as the oxidation of these 13-dihydro-anthracyclines to their respective 13-keto forms, carminomycin and daunorubicin. In vivo, it also catalyzes the C-14 hydroxylation of daunorubicin to form doxorubicin. It can only use NADP. DoxA acts jointly with DnrV. This chain is Cytochrome P-450 monooxygenase DoxA (doxA), found in Streptomyces peucetius subsp. caesius.